Consider the following 115-residue polypeptide: Large ribosomal subunit protein bL20 (115 aa).

Belongs to the bacterial ribosomal protein bL20 family.

Its function is as follows. Binds directly to 23S ribosomal RNA and is necessary for the in vitro assembly process of the 50S ribosomal subunit. It is not involved in the protein synthesizing functions of that subunit. The polypeptide is Large ribosomal subunit protein bL20 (Prochlorococcus marinus (strain SARG / CCMP1375 / SS120)).